The primary structure comprises 136 residues: Galectin-7 (136 aa).

The Galectin domain maps to 6-136 (HKSSLPEGIR…DVQLDSVRIF (131 aa)). 70-76 (WGREERG) is an a beta-D-galactoside binding site.

As to quaternary structure, monomer. As to expression, mainly expressed in stratified squamous epithelium.

Its subcellular location is the cytoplasm. It is found in the nucleus. The protein resides in the secreted. In terms of biological role, could be involved in cell-cell and/or cell-matrix interactions necessary for normal growth control. Pro-apoptotic protein that functions intracellularly upstream of JNK activation and cytochrome c release. The protein is Galectin-7 (LGALS7) of Homo sapiens (Human).